The following is a 228-amino-acid chain: ATP-dependent dethiobiotin synthetase BioD (228 aa).

ATP is bound at residue Asp13 to Val18. Thr17 contacts Mg(2+). The active site involves Lys38. Residues Asp55, Glu116–Gly119, Asn176–Arg177, and Pro205–Ile207 contribute to the ATP site. The Mg(2+) site is built by Asp55 and Glu116.

This sequence belongs to the dethiobiotin synthetase family. As to quaternary structure, homodimer. It depends on Mg(2+) as a cofactor.

It localises to the cytoplasm. It carries out the reaction (7R,8S)-7,8-diammoniononanoate + CO2 + ATP = (4R,5S)-dethiobiotin + ADP + phosphate + 3 H(+). It functions in the pathway cofactor biosynthesis; biotin biosynthesis; biotin from 7,8-diaminononanoate: step 1/2. In terms of biological role, catalyzes a mechanistically unusual reaction, the ATP-dependent insertion of CO2 between the N7 and N8 nitrogen atoms of 7,8-diaminopelargonic acid (DAPA, also called 7,8-diammoniononanoate) to form a ureido ring. This Vibrio parahaemolyticus serotype O3:K6 (strain RIMD 2210633) protein is ATP-dependent dethiobiotin synthetase BioD.